The chain runs to 217 residues: Adenylate kinase (217 aa).

Position 10–15 (10–15 (GAGKGT)) interacts with ATP. Residues 30–59 (STGDMLRAAIREGTELGLKAKSVMESGGLV) are NMP. Residues T31, R36, 57 to 59 (GLV), 85 to 88 (GFPR), and Q92 each bind AMP. The interval 122–159 (GRRQHPASGRVYHVVYNPPKVEGKDDETGEDLVQRPDD) is LID. ATP contacts are provided by residues R123 and 132–133 (VY). AMP-binding residues include R156 and R167. R202 is a binding site for ATP.

This sequence belongs to the adenylate kinase family. In terms of assembly, monomer.

Its subcellular location is the cytoplasm. It carries out the reaction AMP + ATP = 2 ADP. It functions in the pathway purine metabolism; AMP biosynthesis via salvage pathway; AMP from ADP: step 1/1. Functionally, catalyzes the reversible transfer of the terminal phosphate group between ATP and AMP. Plays an important role in cellular energy homeostasis and in adenine nucleotide metabolism. In Acinetobacter baumannii (strain AB307-0294), this protein is Adenylate kinase.